The primary structure comprises 89 residues: HssA/B-like protein 22 (89 aa).

It belongs to the hssA/B family.

The chain is HssA/B-like protein 22 (hssl22) from Dictyostelium discoideum (Social amoeba).